The sequence spans 283 residues: 4-diphosphocytidyl-2-C-methyl-D-erythritol kinase (283 aa).

Lys10 is an active-site residue. An ATP-binding site is contributed by 95–105; sequence PVAAGLGGGSS. The active site involves Asp137.

It belongs to the GHMP kinase family. IspE subfamily.

It carries out the reaction 4-CDP-2-C-methyl-D-erythritol + ATP = 4-CDP-2-C-methyl-D-erythritol 2-phosphate + ADP + H(+). Its pathway is isoprenoid biosynthesis; isopentenyl diphosphate biosynthesis via DXP pathway; isopentenyl diphosphate from 1-deoxy-D-xylulose 5-phosphate: step 3/6. Functionally, catalyzes the phosphorylation of the position 2 hydroxy group of 4-diphosphocytidyl-2C-methyl-D-erythritol. This Limosilactobacillus fermentum (strain NBRC 3956 / LMG 18251) (Lactobacillus fermentum) protein is 4-diphosphocytidyl-2-C-methyl-D-erythritol kinase.